We begin with the raw amino-acid sequence, 957 residues long: Protein translocase subunit SecA (957 aa).

Residues glutamine 87, 105 to 109 (GEGKT), and aspartate 512 contribute to the ATP site. Residues 924–957 (AAPAQAPSKSKRSAGRNDPCPCGSGQKYKKCCGK) are disordered. 4 residues coordinate Zn(2+): cysteine 943, cysteine 945, cysteine 954, and cysteine 955.

It belongs to the SecA family. Monomer and homodimer. Part of the essential Sec protein translocation apparatus which comprises SecA, SecYEG and auxiliary proteins SecDF-YajC and YidC. The cofactor is Zn(2+).

It is found in the cell inner membrane. It localises to the cytoplasm. It carries out the reaction ATP + H2O + cellular proteinSide 1 = ADP + phosphate + cellular proteinSide 2.. Its function is as follows. Part of the Sec protein translocase complex. Interacts with the SecYEG preprotein conducting channel. Has a central role in coupling the hydrolysis of ATP to the transfer of proteins into and across the cell membrane, serving as an ATP-driven molecular motor driving the stepwise translocation of polypeptide chains across the membrane. This Geobacter sp. (strain M21) protein is Protein translocase subunit SecA.